The following is a 111-amino-acid chain: DNA-binding protein MTH_1615 (111 aa).

The protein belongs to the PDCD5 family.

Functionally, DNA-binding protein which can interact with a randomly chosen 20-mer of double-stranded DNA. The chain is DNA-binding protein MTH_1615 from Methanothermobacter thermautotrophicus (strain ATCC 29096 / DSM 1053 / JCM 10044 / NBRC 100330 / Delta H) (Methanobacterium thermoautotrophicum).